Here is a 204-residue protein sequence, read N- to C-terminus: Large ribosomal subunit protein uL4 (204 aa).

The segment at 49-75 (TKGRSDVSGGGKKPWRQKGRGGARAGS) is disordered.

It belongs to the universal ribosomal protein uL4 family. As to quaternary structure, part of the 50S ribosomal subunit.

One of the primary rRNA binding proteins, this protein initially binds near the 5'-end of the 23S rRNA. It is important during the early stages of 50S assembly. It makes multiple contacts with different domains of the 23S rRNA in the assembled 50S subunit and ribosome. Its function is as follows. Forms part of the polypeptide exit tunnel. This is Large ribosomal subunit protein uL4 from Campylobacter jejuni subsp. jejuni serotype O:23/36 (strain 81-176).